Consider the following 78-residue polypeptide: UPF0291 protein SE_1024 (78 aa).

The tract at residues 53-78 is disordered; the sequence is TKVIDPEGNDVTPEKLKKIQEEKHNK. The segment covering 64–78 has biased composition (basic and acidic residues); the sequence is TPEKLKKIQEEKHNK.

The protein belongs to the UPF0291 family.

It localises to the cytoplasm. This chain is UPF0291 protein SE_1024, found in Staphylococcus epidermidis (strain ATCC 12228 / FDA PCI 1200).